The chain runs to 215 residues: Urease accessory protein UreG (215 aa).

The segment at methionine 1–glycine 21 is disordered. Glycine 24 to threonine 31 serves as a coordination point for GTP.

Belongs to the SIMIBI class G3E GTPase family. UreG subfamily. In terms of assembly, homodimer. UreD, UreF and UreG form a complex that acts as a GTP-hydrolysis-dependent molecular chaperone, activating the urease apoprotein by helping to assemble the nickel containing metallocenter of UreC. The UreE protein probably delivers the nickel.

Its subcellular location is the cytoplasm. Its function is as follows. Facilitates the functional incorporation of the urease nickel metallocenter. This process requires GTP hydrolysis, probably effectuated by UreG. The polypeptide is Urease accessory protein UreG (Burkholderia lata (strain ATCC 17760 / DSM 23089 / LMG 22485 / NCIMB 9086 / R18194 / 383)).